Reading from the N-terminus, the 380-residue chain is Glutamine synthetase, chloroplastic (380 aa).

The GS beta-grasp domain maps to 35-125 (MAAEYIWADG…VMCEVFAPDG (91 aa)). Residues 132–380 (TRAKLREIID…RLLIKTVLKG (249 aa)) form the GS catalytic domain.

It belongs to the glutamine synthetase family. As to quaternary structure, homooctamer.

It localises to the plastid. The protein localises to the chloroplast. The enzyme catalyses L-glutamate + NH4(+) + ATP = L-glutamine + ADP + phosphate + H(+). The polypeptide is Glutamine synthetase, chloroplastic (GLN2) (Chlamydomonas reinhardtii (Chlamydomonas smithii)).